Here is a 416-residue protein sequence, read N- to C-terminus: Putative nucleoside permease NupX (416 aa).

The Periplasmic segment spans residues 1 to 2 (MD). Residues 3–23 (VMRSVLGMVVLLTIAFLLSVN) traverse the membrane as a helical segment. Over 24-31 (KKKISLRT) the chain is Cytoplasmic. A helical transmembrane segment spans residues 32 to 52 (VGAALVLQVVIGGIMLWLPPG). Topologically, residues 53–95 (RWVAEKVAFGVHKVMAYSDAGSAFIFGSLVGPKMDTLFDGAGF) are periplasmic. Residues 96–118 (IFGFRVLPAIIFVTALVSILYYI) traverse the membrane as a helical segment. Topologically, residues 119–172 (GVMGILIRILGGIFQKALNISKIESFVAVTTIFLGQNEIPAIVKPFIDRLNRNE) are cytoplasmic. Residues 173–193 (LFTAICSGMASIAGSTMIGYA) traverse the membrane as a helical segment. The Periplasmic portion of the chain corresponds to 194–196 (ALG). Residues 197 to 217 (VPVEYLLAASLMAIPGGILFA) traverse the membrane as a helical segment. The Cytoplasmic portion of the chain corresponds to 218–246 (RLLSPATESSQVSFNNLSFTETPPKSIIE). Residues 247 to 267 (AAATGAMTGLKIAAGVATVVM) form a helical membrane-spanning segment. Topologically, residues 268–352 (AFVAIIALIN…QTAGTLDAKT (85 aa)) are periplasmic. A helical transmembrane segment spans residues 353–373 (VAIISFALCGFANFGSIGVVV). Residues 374-394 (GAFSAVAPHRAPEIAQLGLRA) are Cytoplasmic-facing. The helical transmembrane segment at 395-415 (LAAATLSNLMSATIAGFFIGL) threads the bilayer. Residue Ala416 is a topological domain, periplasmic.

The protein belongs to the concentrative nucleoside transporter (CNT) (TC 2.A.41) family.

The protein resides in the cell inner membrane. In Escherichia coli (strain K12), this protein is Putative nucleoside permease NupX (nupX).